The chain runs to 296 residues: Probable endonuclease 4 (296 aa).

The Zn(2+) site is built by His-68, His-109, Glu-144, Asp-178, His-181, His-213, Asp-226, His-228, and Glu-258.

Belongs to the AP endonuclease 2 family. The cofactor is Zn(2+).

It carries out the reaction Endonucleolytic cleavage to 5'-phosphooligonucleotide end-products.. In terms of biological role, endonuclease IV plays a role in DNA repair. It cleaves phosphodiester bonds at apurinic or apyrimidinic (AP) sites, generating a 3'-hydroxyl group and a 5'-terminal sugar phosphate. The chain is Probable endonuclease 4 from Staphylococcus epidermidis (strain ATCC 35984 / DSM 28319 / BCRC 17069 / CCUG 31568 / BM 3577 / RP62A).